We begin with the raw amino-acid sequence, 436 residues long: 3-ketoacyl-CoA thiolase (436 aa).

Cys99 (acyl-thioester intermediate) is an active-site residue. Residues His392 and Cys422 each act as proton acceptor in the active site.

The protein belongs to the thiolase-like superfamily. Thiolase family. Heterotetramer of two alpha chains (FadJ) and two beta chains (FadI).

The protein resides in the cytoplasm. The enzyme catalyses an acyl-CoA + acetyl-CoA = a 3-oxoacyl-CoA + CoA. It participates in lipid metabolism; fatty acid beta-oxidation. Catalyzes the final step of fatty acid oxidation in which acetyl-CoA is released and the CoA ester of a fatty acid two carbons shorter is formed. The polypeptide is 3-ketoacyl-CoA thiolase (Salmonella dublin (strain CT_02021853)).